The chain runs to 1485 residues: Chromosome partition protein MukB (1485 aa).

Position 34-41 (34-41 (GGNGAGKS)) interacts with ATP. Coiled coils occupy residues 337 to 480 (LNLV…QAYQ) and 509 to 605 (QHLA…PVWL). The segment at 666–783 (PSGAEDARLI…EVPLFGRAAR (118 aa)) is flexible hinge. Coiled-coil stretches lie at residues 835-915 (EAEI…IQQH) and 977-1116 (GMLT…AKAG).

It belongs to the SMC family. MukB subfamily. In terms of assembly, homodimerization via its hinge domain. Binds to DNA via its C-terminal region. Interacts, and probably forms a ternary complex, with MukE and MukF via its C-terminal region. The complex formation is stimulated by calcium or magnesium. Interacts with tubulin-related protein FtsZ.

The protein localises to the cytoplasm. Its subcellular location is the nucleoid. Its function is as follows. Plays a central role in chromosome condensation, segregation and cell cycle progression. Functions as a homodimer, which is essential for chromosome partition. Involved in negative DNA supercoiling in vivo, and by this means organize and compact chromosomes. May achieve or facilitate chromosome segregation by condensation DNA from both sides of a centrally located replisome during cell division. This Yersinia pseudotuberculosis serotype O:3 (strain YPIII) protein is Chromosome partition protein MukB.